We begin with the raw amino-acid sequence, 358 residues long: Ubiquitin thioesterase OTU1 (358 aa).

One can recognise a Ubiquitin-like domain in the interval 5–87 (FSVKLKSKKG…LIVEEKAGAA (83 aa)). A UBX-like region spans residues 8-94 (KLKSKKGQFI…GAAGPTSTPL (87 aa)). The tract at residues 83 to 108 (KAGAAGPTSTPLASGSGSSTMEDDEA) is disordered. The span at 89–102 (PTSTPLASGSGSST) shows a compositional bias: polar residues. One can recognise an OTU domain in the interval 161 to 285 (LLKKVVPADN…GIHYDPLYME (125 aa)). A cys-loop region spans residues 166–172 (VPADNSC). The active site involves Asp169. Cys172 functions as the Nucleophile in the catalytic mechanism. The tract at residues 224-234 (IQKADSWGGAI) is variable-loop. Positions 274 to 278 (FDGIH) are his-loop. A substrate-binding site is contributed by Ile277. His278 is an active-site residue. Positions 301-306 (MGVYQQ) are S2 site. The segment at 328–352 (LRCMDCDVMLVGQGQAQEHAKKTGH) adopts a C2H2-type zinc-finger fold. Residue His352 is part of the active site.

The catalysed reaction is Thiol-dependent hydrolysis of ester, thioester, amide, peptide and isopeptide bonds formed by the C-terminal Gly of ubiquitin (a 76-residue protein attached to proteins as an intracellular targeting signal).. Hydrolase that can remove conjugated ubiquitin from proteins and may therefore play an important regulatory role at the level of protein turnover by preventing degradation. The protein is Ubiquitin thioesterase OTU1 of Drosophila pseudoobscura pseudoobscura (Fruit fly).